The sequence spans 181 residues: Probable calcium-binding protein CML43 (181 aa).

EF-hand domains follow at residues 24-59, 107-142, and 145-180; these read LNAL…LGLD, SPES…LGLP, and GEIE…VVVP. Residues Asp37, Asn39, Asp41, Glu48, Asp120, Asp122, Asp124, Glu131, Asp158, Asn160, Asp162, Arg164, and Glu169 each coordinate Ca(2+).

In terms of tissue distribution, expressed specifically in roots.

Functionally, calcium-binding protein that may mediate calcium-dependent signal during plant defense response. The chain is Probable calcium-binding protein CML43 (CML43) from Arabidopsis thaliana (Mouse-ear cress).